The sequence spans 165 residues: MKVKINEVHSVFAWSWHIPSTSDEDAANNDPIGNDEDEDVCGICRASYNGTCPSCKFPGDQCPLVIGLCHHNFHDHCIYRWLDTPTSKGLCPMCRQTFQLQKGLAINDAHVQKFVEIVSRRREEMIEEGVAEEFVDFDEPIRQNTDNPIGRQQVDTILDEDFLLR.

Residues 52-95 form an RING-type; atypical zinc finger; that stretch reads CPSCKFPGDQCPLVIGLCHHNFHDHCIYRWLDTPTSKGLCPMCR.

The APC/C is composed of at least 13 subunits that stay tightly associated throughout the cell cycle: APC1, APC2, APC4, APC5, APC9, APC11, CDC16, CDC23, CDC26, CDC27, DOC1, MND2 and SWM1.

Its pathway is protein modification; protein ubiquitination. Functionally, probably catalytic subunit of the anaphase promoting complex/cyclosome (APC/C), a cell cycle-regulated E3 ubiquitin-protein ligase complex that controls progression through mitosis and the G1 phase of the cell cycle. The APC/C is thought to confer substrate specificity and, in the presence of ubiquitin-conjugating E2 enzymes, it catalyzes the formation of protein-ubiquitin conjugates that are subsequently degraded by the 26S proteasome. In early mitosis, the APC/C is activated by CDC20 and targets securin PDS1, the B-type cyclin CLB5, and other anaphase inhibitory proteins for proteolysis, thereby triggering the separation of sister chromatids at the metaphase-to-anaphase transition. In late mitosis and in G1, degradation of CLB5 allows activation of the APC/C by CDH1, which is needed to destroy CDC20 and the B-type cyclin CLB2 to allow exit from mitosis and creating the low CDK state necessary for cytokinesis and for reforming prereplicative complexes in G1 prior to another round of replication. APC11 is required to recruit the ubiquitin-conjugating enzyme E2 to the APC/C. This is Anaphase-promoting complex subunit 11 (APC11) from Saccharomyces cerevisiae (strain ATCC 204508 / S288c) (Baker's yeast).